Reading from the N-terminus, the 67-residue chain is uncharacterized protein (67 aa).

A signal peptide spans 1–28; that stretch reads MSHVSVIAARLLVWVGILLCLGVPQLWA. Asn-39 carries N-linked (GlcNAc...) asparagine; by host glycosylation.

This is an uncharacterized protein from Invertebrate iridescent virus 3 (IIV-3).